The sequence spans 122 residues: Large ribosomal subunit protein uL14 (122 aa).

This sequence belongs to the universal ribosomal protein uL14 family. In terms of assembly, part of the 50S ribosomal subunit. Forms a cluster with proteins L3 and L19. In the 70S ribosome, L14 and L19 interact and together make contacts with the 16S rRNA in bridges B5 and B8.

Its function is as follows. Binds to 23S rRNA. Forms part of two intersubunit bridges in the 70S ribosome. The polypeptide is Large ribosomal subunit protein uL14 (Phenylobacterium zucineum (strain HLK1)).